A 196-amino-acid chain; its full sequence is Small ribosomal subunit protein uS4c (196 aa).

An S4 RNA-binding domain is found at 89–157 (MRLDNILFRL…VQNYIASSDP (69 aa)).

Belongs to the universal ribosomal protein uS4 family. As to quaternary structure, part of the 30S ribosomal subunit. Contacts protein S5. The interaction surface between S4 and S5 is involved in control of translational fidelity.

It localises to the plastid. Its subcellular location is the chloroplast. One of the primary rRNA binding proteins, it binds directly to 16S rRNA where it nucleates assembly of the body of the 30S subunit. In terms of biological role, with S5 and S12 plays an important role in translational accuracy. The chain is Small ribosomal subunit protein uS4c (rps4) from Elymus canadensis (Canada wild rye).